Reading from the N-terminus, the 164-residue chain is Ion-translocating oxidoreductase complex subunit G (164 aa).

T125 bears the FMN phosphoryl threonine mark.

It belongs to the RnfG family. The complex is composed of six subunits: RnfA, RnfB, RnfC, RnfD, RnfE and RnfG. FMN is required as a cofactor.

Part of a membrane-bound complex that couples electron transfer with translocation of ions across the membrane. The sequence is that of Ion-translocating oxidoreductase complex subunit G from Buchnera aphidicola subsp. Acyrthosiphon pisum (strain APS) (Acyrthosiphon pisum symbiotic bacterium).